The chain runs to 291 residues: Cilia- and flagella-associated protein 298 (291 aa).

This sequence belongs to the CFAP298 family.

In Drosophila melanogaster (Fruit fly), this protein is Cilia- and flagella-associated protein 298.